The chain runs to 955 residues: 2-oxoglutarate dehydrogenase E1 component (955 aa).

Belongs to the alpha-ketoglutarate dehydrogenase family. In terms of assembly, homodimer. Part of the 2-oxoglutarate dehydrogenase (OGDH) complex composed of E1 (2-oxoglutarate dehydrogenase), E2 (dihydrolipoamide succinyltransferase) and E3 (dihydrolipoamide dehydrogenase); the complex contains multiple copies of the three enzymatic components (E1, E2 and E3). Requires thiamine diphosphate as cofactor.

It catalyses the reaction N(6)-[(R)-lipoyl]-L-lysyl-[protein] + 2-oxoglutarate + H(+) = N(6)-[(R)-S(8)-succinyldihydrolipoyl]-L-lysyl-[protein] + CO2. In terms of biological role, E1 component of the 2-oxoglutarate dehydrogenase (OGDH) complex which catalyzes the decarboxylation of 2-oxoglutarate, the first step in the conversion of 2-oxoglutarate to succinyl-CoA and CO(2). The sequence is that of 2-oxoglutarate dehydrogenase E1 component from Bacillus cereus (strain AH187).